Reading from the N-terminus, the 285-residue chain is Methionine aminopeptidase 2 (285 aa).

H114 contacts substrate. A divalent metal cation is bound by residues D131, D142, and H205. Residue H212 coordinates substrate. Residues E238 and E269 each coordinate a divalent metal cation.

Monomer. It depends on Co(2+) as a cofactor. Zn(2+) serves as cofactor. Mn(2+) is required as a cofactor. The cofactor is Fe(2+).

It carries out the reaction Release of N-terminal amino acids, preferentially methionine, from peptides and arylamides.. With respect to regulation, inhibited by bengamide derivatives and by various metalloform-selective inhibitors. Removes the N-terminal methionine from nascent proteins. The N-terminal methionine is often cleaved when the second residue in the primary sequence is small and uncharged (Met-Ala-, Cys, Gly, Pro, Ser, Thr, or Val). Requires deformylation of the N(alpha)-formylated initiator methionine before it can be hydrolyzed. In Mycobacterium tuberculosis (strain ATCC 25618 / H37Rv), this protein is Methionine aminopeptidase 2.